A 133-amino-acid chain; its full sequence is MIKIKKRKRNTYEVYALGQHICMSPHKARRIIDQIRGRSYEETLMILELMPYRACYPIFKLIYSAAANASHNMGFNEANLIISKAEVNEGTTVKKLKPQARGRGYPIKRSTCHISIVLKNISLYEEYDEYIYI.

It belongs to the universal ribosomal protein uL22 family. In terms of assembly, part of the 50S ribosomal subunit.

The protein localises to the plastid. It localises to the chloroplast. Its function is as follows. This protein binds specifically to 23S rRNA. In terms of biological role, the globular domain of the protein is located near the polypeptide exit tunnel on the outside of the subunit, while an extended beta-hairpin is found that lines the wall of the exit tunnel in the center of the 70S ribosome. The protein is Large ribosomal subunit protein uL22c (rpl22) of Manihot esculenta (Cassava).